The following is a 601-amino-acid chain: Proline--tRNA ligase (601 aa).

It belongs to the class-II aminoacyl-tRNA synthetase family. ProS type 1 subfamily. As to quaternary structure, homodimer.

The protein resides in the cytoplasm. The enzyme catalyses tRNA(Pro) + L-proline + ATP = L-prolyl-tRNA(Pro) + AMP + diphosphate. In terms of biological role, catalyzes the attachment of proline to tRNA(Pro) in a two-step reaction: proline is first activated by ATP to form Pro-AMP and then transferred to the acceptor end of tRNA(Pro). As ProRS can inadvertently accommodate and process non-cognate amino acids such as alanine and cysteine, to avoid such errors it has two additional distinct editing activities against alanine. One activity is designated as 'pretransfer' editing and involves the tRNA(Pro)-independent hydrolysis of activated Ala-AMP. The other activity is designated 'posttransfer' editing and involves deacylation of mischarged Ala-tRNA(Pro). The misacylated Cys-tRNA(Pro) is not edited by ProRS. The protein is Proline--tRNA ligase of Trichodesmium erythraeum (strain IMS101).